The sequence spans 66 residues: UPF0337 protein pc0632 (66 aa).

Belongs to the UPF0337 (CsbD) family.

This is UPF0337 protein pc0632 from Protochlamydia amoebophila (strain UWE25).